A 431-amino-acid polypeptide reads, in one-letter code: Argininosuccinate lyase (431 aa).

It belongs to the lyase 1 family. Argininosuccinate lyase subfamily.

The protein localises to the cytoplasm. The enzyme catalyses 2-(N(omega)-L-arginino)succinate = fumarate + L-arginine. Its pathway is amino-acid biosynthesis; L-arginine biosynthesis; L-arginine from L-ornithine and carbamoyl phosphate: step 3/3. The chain is Argininosuccinate lyase from Stenotrophomonas maltophilia (strain K279a).